The primary structure comprises 529 residues: Cytochrome P450 monooxygenase ausG (529 aa).

The chain crosses the membrane as a helical span at residues 31 to 51 (FLVTCGLPWLLLLFSVTIILF). C470 contributes to the heme binding site.

It belongs to the cytochrome P450 family. Requires heme as cofactor.

Its subcellular location is the membrane. The protein operates within secondary metabolite biosynthesis; terpenoid biosynthesis. Functionally, cytochrome P450 monooxygenase; part of the gene cluster B that mediates the biosynthesis of austinol and dehydroaustinol, two fungal meroterpenoids. The first step of the pathway is the synthesis of 3,5-dimethylorsellinic acid by the polyketide synthase ausA. 3,5-dimethylorsellinic acid is then prenylated by the polyprenyl transferase ausN. Further epoxidation by the FAD-dependent monooxygenase ausM and cyclization by the probable terpene cyclase ausL lead to the formation of protoaustinoid A. Protoaustinoid A is then oxidized to spiro-lactone preaustinoid A3 by the combined action of the FAD-binding monooxygenases ausB and ausC, and the dioxygenase ausE. Acid-catalyzed keto-rearrangement and ring contraction of the tetraketide portion of preaustinoid A3 by ausJ lead to the formation of preaustinoid A4. The aldo-keto reductase ausK, with the help of ausH, is involved in the next step by transforming preaustinoid A4 into isoaustinone which is in turn hydroxylated by the P450 monooxygenase ausI to form austinolide. Finally, the cytochrome P450 monooxygenase ausG modifies austinolide to austinol. Austinol can be further modified to dehydroaustinol which forms a diffusible complex with diorcinol that initiates conidiation. Due to genetic rearrangements of the clusters and the subsequent loss of some enzymes, the end products of the Emericella nidulans austinoid biosynthesis clusters are austinol and dehydroaustinol, even if additional enzymes, such as the O-acetyltransferase ausQ and the cytochrome P450 monooxygenase ausR are still functional. In Emericella nidulans (strain FGSC A4 / ATCC 38163 / CBS 112.46 / NRRL 194 / M139) (Aspergillus nidulans), this protein is Cytochrome P450 monooxygenase ausG.